Reading from the N-terminus, the 1188-residue chain is DNA polymerase (1188 aa).

Residues 1 to 74 form a disordered region; sequence MALVPSPRAG…PAANNVSLTP (74 aa). Low complexity predominate over residues 31-41; that stretch reads STAGAAPTATR.

It belongs to the DNA polymerase type-B family. Heterodimer with the terminal protein; this heterodimer binds to bp 9 to 18 of the genome. Forms a complex with viral pTP, DBP and hosts NFIA and POU2F1/OCT1 for initiation of replication.

The protein localises to the host nucleus. The enzyme catalyses DNA(n) + a 2'-deoxyribonucleoside 5'-triphosphate = DNA(n+1) + diphosphate. In terms of biological role, eukaryotic-type DNA polymerase involved in viral genomic replication. DNA synthesis is protein primed, and acts in a strand displacement replication. Assembles in complex with viral pTP, DBP, host NFIA and host POU2F1/OCT1 on viral origin of replication. The polymerase covalently transfers dCMP onto pTP, thereby initiating complementary strand synthesis. In Human adenovirus F serotype 40 (HAdV-40), this protein is DNA polymerase.